Reading from the N-terminus, the 202-residue chain is Glycerol-3-phosphate acyltransferase (202 aa).

Helical transmembrane passes span Met-1–Leu-21, Ala-84–Phe-104, Ile-116–Ala-136, and Ser-143–Phe-163.

The protein belongs to the PlsY family. Probably interacts with PlsX.

It is found in the cell inner membrane. It catalyses the reaction an acyl phosphate + sn-glycerol 3-phosphate = a 1-acyl-sn-glycero-3-phosphate + phosphate. Its pathway is lipid metabolism; phospholipid metabolism. Catalyzes the transfer of an acyl group from acyl-phosphate (acyl-PO(4)) to glycerol-3-phosphate (G3P) to form lysophosphatidic acid (LPA). This enzyme utilizes acyl-phosphate as fatty acyl donor, but not acyl-CoA or acyl-ACP. This chain is Glycerol-3-phosphate acyltransferase, found in Nitrosospira multiformis (strain ATCC 25196 / NCIMB 11849 / C 71).